The chain runs to 367 residues: MTPSTLPIDQYDAQLAEKTGRLKAMMASYHAPEPQVFRSPVSHYRMRAEFRIWHDGDDLYHIMFDQQTKHRIRVDQFPVASELINRLMPALLNALRPHLTLRRKLFQIDYLSTMSNEIVVSLLYHKTLDDEWRQQAIALRDQLRQQGFNLQLIGRATKTKICLDHDYVDECLPVAGKQMVYRQVENSFTQPNAAMNIQMLEWALSVTEGSKGDLLELYCGNGNFSLALARNFERVLATEIAKPSVQAAQYNITANQIGNVQIIRMAAEEFTQAMRGVRQFNRLEGIDLASYRCDTIFVDPPRSGLDEETVRLVQEYPRILYISCNPETLCANLATLTQTHRVSQLALFDQFPYTHHMECGVLLEKRT.

Residues glutamine 190, tyrosine 218, asparagine 223, glutamate 239, and aspartate 299 each contribute to the S-adenosyl-L-methionine site. Catalysis depends on cysteine 324, which acts as the Nucleophile. The Proton acceptor role is filled by glutamate 358.

The protein belongs to the class I-like SAM-binding methyltransferase superfamily. RNA M5U methyltransferase family. TrmA subfamily.

The catalysed reaction is uridine(54) in tRNA + S-adenosyl-L-methionine = 5-methyluridine(54) in tRNA + S-adenosyl-L-homocysteine + H(+). It catalyses the reaction uridine(341) in tmRNA + S-adenosyl-L-methionine = 5-methyluridine(341) in tmRNA + S-adenosyl-L-homocysteine + H(+). Its function is as follows. Dual-specificity methyltransferase that catalyzes the formation of 5-methyluridine at position 54 (m5U54) in all tRNAs, and that of position 341 (m5U341) in tmRNA (transfer-mRNA). The sequence is that of tRNA/tmRNA (uracil-C(5))-methyltransferase from Musicola paradisiaca (strain Ech703) (Dickeya paradisiaca).